A 231-amino-acid chain; its full sequence is Protein OPG061 (231 aa).

It belongs to the orthopoxvirus OPG058 family.

Its subcellular location is the host nucleus. It is found in the host nucleolus. The protein is Protein OPG061 (OPG061) of Homo sapiens (Human).